The chain runs to 70 residues: Large ribosomal subunit protein uL29 (70 aa).

It belongs to the universal ribosomal protein uL29 family.

The sequence is that of Large ribosomal subunit protein uL29 from Gloeobacter violaceus (strain ATCC 29082 / PCC 7421).